The sequence spans 374 residues: PqqA peptide cyclase (374 aa).

One can recognise a Radical SAM core domain in the interval 13–230 (VPAPIAMLAE…EAEARLRGTL (218 aa)). [4Fe-4S] cluster contacts are provided by Cys27, Cys31, and Cys34.

It belongs to the radical SAM superfamily. PqqE family. Interacts with PqqD. The interaction is necessary for activity of PqqE. [4Fe-4S] cluster is required as a cofactor.

The catalysed reaction is [PQQ precursor protein] + S-adenosyl-L-methionine = E-Y cross-linked-[PQQ precursor protein] + 5'-deoxyadenosine + L-methionine + H(+). It functions in the pathway cofactor biosynthesis; pyrroloquinoline quinone biosynthesis. Its function is as follows. Catalyzes the cross-linking of a glutamate residue and a tyrosine residue in the PqqA protein as part of the biosynthesis of pyrroloquinoline quinone (PQQ). The protein is PqqA peptide cyclase of Ruegeria pomeroyi (strain ATCC 700808 / DSM 15171 / DSS-3) (Silicibacter pomeroyi).